We begin with the raw amino-acid sequence, 466 residues long: Histidine--tRNA ligase (466 aa).

The protein belongs to the class-II aminoacyl-tRNA synthetase family. As to quaternary structure, homodimer.

The protein resides in the cytoplasm. The enzyme catalyses tRNA(His) + L-histidine + ATP = L-histidyl-tRNA(His) + AMP + diphosphate + H(+). This Xylella fastidiosa (strain 9a5c) protein is Histidine--tRNA ligase (hisS).